Reading from the N-terminus, the 1129-residue chain is Serine/threonine-protein kinase LATS1 (1129 aa).

The segment covering 1-11 (MKRGEKPEGYR) has biased composition (basic and acidic residues). Residues 1 to 71 (MKRGEKPEGY…PRQVRNPPKF (71 aa)) are disordered. The segment covering 19 to 30 (PASNYPGSSRQM) has biased composition (polar residues). The span at 46 to 64 (DASKAEHNLNKMSTEDPRQ) shows a compositional bias: basic and acidic residues. One can recognise a UBA domain in the interval 100-141 (EVNPQMFQDLQAAGFDEDMVIQALQKTNNRSIEAAVEFISKM). 2 disordered regions span residues 148–216 (REQM…RPLS) and 228–276 (PSNG…QTKR). Residues 235–268 (NPPPPPQVRSVTPPPPPRGQTPPPRGTTPPPPSW) are compositionally biased toward pro residues. T246 bears the Phosphothreonine mark. S278 bears the Phosphoserine mark. 4 disordered regions span residues 292–317 (PPGA…SQAQ), 363–407 (PTGS…VPQS), 432–492 (WPQS…TPAP), and 513–630 (PTHP…ESRI). The span at 300-312 (YPPPPLTTSPMNP) shows a compositional bias: pro residues. A PPxY motif 1 motif is present at residues 372 to 375 (PPPY). Residues 380 to 392 (ANGQSPSALQTGA) are compositionally biased toward polar residues. Positions 433–445 (PQSSSAPAQSSPS) are enriched in low complexity. The span at 453 to 481 (WQPNIPVRSNSFNNPLGSRASHSANSQPS) shows a compositional bias: polar residues. S463 bears the Phosphoserine; by NUAK1 and NUAK2 mark. Composition is skewed to low complexity over residues 482-492 (ATTVTAITPAP) and 520-530 (PQPVQTVQPTP). An interaction with YAP1 region spans residues 525-654 (TVQPTPFSEG…HVENVLKSHQ (130 aa)). The PPxY motif 2 signature appears at 555–558 (PPPY). Basic and acidic residues predominate over residues 578–608 (PCKDEQPSLPKEDDSEKSADSGDSGDKEKKQ). A Phosphoserine modification is found at S612. Residues 620-629 (KKDEERRESR) are compositionally biased toward basic and acidic residues. S673 carries the post-translational modification Phosphoserine. Residues 704–1009 (FVKIKTLGIG…ADEIKAHPFF (306 aa)) form the Protein kinase domain. Residues 710–718 (LGIGAFGEV) and K733 contribute to the ATP site. The active-site Proton acceptor is the D827. S908 is modified (phosphoserine; by STK3/MST2). Positions 1010–1089 (KTIDFSSDLR…RRFFDDNGYP (80 aa)) constitute an AGC-kinase C-terminal domain. T1078 carries the post-translational modification Phosphothreonine; by STK3/MST2. The disordered stretch occupies residues 1104–1129 (QGSEQQSDEDDQHTSSDGNNRDLVYV).

The protein belongs to the protein kinase superfamily. AGC Ser/Thr protein kinase family. As to quaternary structure, complexes with CDK1 in early mitosis. LATS1-associated CDK1 has no mitotic cyclin partner and no apparent kinase activity. Binds phosphorylated ZYX, locating this protein to the mitotic spindle and suggesting a role for actin regulatory proteins during mitosis. Binds to and colocalizes with LIMK1 at the actomyosin contractile ring during cytokinesis. Interacts (via PPxY motif 2) with YAP1 (via WW domains). Interacts with MOB1A and MOB1B. Interacts with LIMD1, WTIP and AJUBA. Interacts with ESR1, DCAF1 and DCAF13; probably recruits DCAF1 and DCAF13 to ESR1 to promote ESR1 ubiquitination and ubiquitin-mediated proteasomal degradation. Interacts with STK3/MST2; this interaction is inhibited in the presence of DLG5. Interacts with SCRIB in the presence of DLG5. Interacts with WWTR1/TAZ. Interacts with WWC1, WWC2 and WWC3 (via their WW domains). Mg(2+) serves as cofactor. Post-translationally, autophosphorylated and phosphorylated during M-phase of the cell cycle. Phosphorylated by STK3/MST2 at Ser-908 and Thr-1078, which results in its activation. Phosphorylated by MAP4Ks; in parallel to STK3/MST2 and resulting to its activation. Phosphorylation at Ser-463 by NUAK1 and NUAK2 leads to decreased protein level and is required to regulate cellular senescence and cellular ploidy.

The protein resides in the cytoplasm. Its subcellular location is the cytoskeleton. It is found in the microtubule organizing center. It localises to the centrosome. The protein localises to the spindle. The protein resides in the midbody. Its subcellular location is the spindle pole body. It carries out the reaction L-seryl-[protein] + ATP = O-phospho-L-seryl-[protein] + ADP + H(+). The enzyme catalyses L-threonyl-[protein] + ATP = O-phospho-L-threonyl-[protein] + ADP + H(+). Its function is as follows. Negative regulator of YAP1 in the Hippo signaling pathway that plays a pivotal role in organ size control and tumor suppression by restricting proliferation and promoting apoptosis. The core of this pathway is composed of a kinase cascade wherein STK3/MST2 and STK4/MST1, in complex with its regulatory protein SAV1, phosphorylates and activates LATS1/2 in complex with its regulatory protein MOB1, which in turn phosphorylates and inactivates YAP1 oncoprotein and WWTR1/TAZ. Phosphorylation of YAP1 by LATS1 inhibits its translocation into the nucleus to regulate cellular genes important for cell proliferation, cell death, and cell migration. Acts as a tumor suppressor which plays a critical role in maintenance of ploidy through its actions in both mitotic progression and the G1 tetraploidy checkpoint. Negatively regulates G2/M transition by down-regulating CDK1 kinase activity. Involved in the control of p53 expression. Affects cytokinesis by regulating actin polymerization through negative modulation of LIMK1. May also play a role in endocrine function. Plays a role in mammary gland epithelial cell differentiation, both through the Hippo signaling pathway and the intracellular estrogen receptor signaling pathway by promoting the degradation of ESR1. Acts as an activator of the NLRP3 inflammasome by mediating phosphorylation of 'Ser-265' of NLRP3 following NLRP3 palmitoylation, promoting NLRP3 activation by NEK7. The polypeptide is Serine/threonine-protein kinase LATS1 (Mus musculus (Mouse)).